Here is a 143-residue protein sequence, read N- to C-terminus: Putative pre-16S rRNA nuclease (143 aa).

This sequence belongs to the YqgF nuclease family.

Its subcellular location is the cytoplasm. In terms of biological role, could be a nuclease involved in processing of the 5'-end of pre-16S rRNA. In Agathobacter rectalis (strain ATCC 33656 / DSM 3377 / JCM 17463 / KCTC 5835 / VPI 0990) (Eubacterium rectale), this protein is Putative pre-16S rRNA nuclease.